The chain runs to 348 residues: Erythronate-4-phosphate dehydrogenase (348 aa).

Residues T46 and T67 each contribute to the substrate site. Residue D147 coordinates NAD(+). R209 is an active-site residue. D233 is an NAD(+) binding site. E238 is an active-site residue. H255 (proton donor) is an active-site residue. G258 contributes to the NAD(+) binding site. Residue Y259 coordinates substrate.

It belongs to the D-isomer specific 2-hydroxyacid dehydrogenase family. PdxB subfamily. Homodimer.

It is found in the cytoplasm. The catalysed reaction is 4-phospho-D-erythronate + NAD(+) = (R)-3-hydroxy-2-oxo-4-phosphooxybutanoate + NADH + H(+). It functions in the pathway cofactor biosynthesis; pyridoxine 5'-phosphate biosynthesis; pyridoxine 5'-phosphate from D-erythrose 4-phosphate: step 2/5. Functionally, catalyzes the oxidation of erythronate-4-phosphate to 3-hydroxy-2-oxo-4-phosphonooxybutanoate. The polypeptide is Erythronate-4-phosphate dehydrogenase (Bacteroides fragilis (strain YCH46)).